Reading from the N-terminus, the 706-residue chain is GDNF-inducible zinc finger protein 1 (706 aa).

The region spanning 31-103 is the BTB domain; the sequence is CDVTVSIENQ…VYTAKVRVEE (73 aa). Residues 149–165 are compositionally biased toward polar residues; it reads VEASSGPQVSVTPSSKA. Disordered regions lie at residues 149 to 220 and 242 to 308; these read VEAS…PKIR and RRLR…KDGE. 2 stretches are compositionally biased toward basic and acidic residues: residues 197–212 and 242–277; these read PSKK…KDVA and RRLR…EPAA. 10 C2H2-type zinc fingers span residues 315–337, 346–369, 375–398, 405–427, 433–455, 461–483, 489–511, 517–539, 545–567, and 573–595; these read FQCT…IKYH, YRCD…RHVH, FPCE…LQVH, HRCG…ERTH, YGCT…LRVH, FVCD…KRCH, FMCE…NRIH, FKCE…IKVH, YCCD…HRIH, and YMCN…TSIH. S611 carries the phosphoserine modification.

Belongs to the krueppel C2H2-type zinc-finger protein family. In terms of assembly, interacts with NCL. In terms of tissue distribution, expressed in several tissues, with highest levels in liver. Also expressed in embryos from 7 to 17 dpc.

The protein resides in the nucleus. The protein localises to the cytoplasm. It localises to the nucleolus. Transcriptional repressor that binds the GZF1 responsive element (GRE) (consensus: 5'-TGCGCN[TG][CA]TATA-3'). May be regulating VSX2/HOX10 expression. The chain is GDNF-inducible zinc finger protein 1 from Mus musculus (Mouse).